Here is a 257-residue protein sequence, read N- to C-terminus: Zinc transporter ZupT (257 aa).

5 consecutive transmembrane segments (helical) span residues leucine 5–glycine 25, valine 32–methionine 52, glycine 61–leucine 81, alanine 109–valine 129, and leucine 137–alanine 157. The Fe(2+) site is built by asparagine 120 and glutamate 123. Zn(2+)-binding residues include glutamate 123 and histidine 148. Positions 149, 152, and 181 each coordinate Fe(2+). Residue glutamate 152 coordinates Zn(2+). Transmembrane regions (helical) follow at residues isoleucine 182 to alanine 202, alanine 203 to leucine 223, and glycine 236 to isoleucine 256.

Belongs to the ZIP transporter (TC 2.A.5) family. ZupT subfamily.

The protein localises to the cell inner membrane. The catalysed reaction is Zn(2+)(in) = Zn(2+)(out). Its function is as follows. Mediates zinc uptake. May also transport other divalent cations. The protein is Zinc transporter ZupT of Escherichia fergusonii (strain ATCC 35469 / DSM 13698 / CCUG 18766 / IAM 14443 / JCM 21226 / LMG 7866 / NBRC 102419 / NCTC 12128 / CDC 0568-73).